The primary structure comprises 216 residues: Acyl-homoserine-lactone synthase (216 aa).

It belongs to the autoinducer synthase family.

It catalyses the reaction a fatty acyl-[ACP] + S-adenosyl-L-methionine = an N-acyl-L-homoserine lactone + S-methyl-5'-thioadenosine + holo-[ACP] + H(+). In terms of biological role, required for the synthesis of an acyl-HSL autoinducer that binds to YukR and which is involved in the regulation of motility and morphology. This is Acyl-homoserine-lactone synthase (yukI) from Yersinia ruckeri.